Here is a 298-residue protein sequence, read N- to C-terminus: ATP synthase gamma chain (298 aa).

Belongs to the ATPase gamma chain family. F-type ATPases have 2 components, CF(1) - the catalytic core - and CF(0) - the membrane proton channel. CF(1) has five subunits: alpha(3), beta(3), gamma(1), delta(1), epsilon(1). CF(0) has three main subunits: a, b and c.

It localises to the cell inner membrane. Its function is as follows. Produces ATP from ADP in the presence of a proton gradient across the membrane. The gamma chain is believed to be important in regulating ATPase activity and the flow of protons through the CF(0) complex. This Desulforapulum autotrophicum (strain ATCC 43914 / DSM 3382 / VKM B-1955 / HRM2) (Desulfobacterium autotrophicum) protein is ATP synthase gamma chain.